Reading from the N-terminus, the 510-residue chain is NAD(P)H-quinone oxidoreductase subunit 2 A, chloroplastic (510 aa).

Transmembrane regions (helical) follow at residues 31 to 51 (FIFP…IDLT), 59 to 79 (WFYF…LFRW), 99 to 119 (IFQF…VEYI), 124 to 144 (MAIT…MFLC), 149 to 169 (LITI…LSGY), 183 to 203 (YLLM…WLYG), 229 to 249 (ISIA…PAPF), 295 to 315 (WHLL…LLAI), 323 to 343 (MLAY…IVGD), 354 to 374 (YMLF…LFGL), 395 to 415 (ALSL…AGFF), and 418 to 438 (LYLF…IGLL).

The protein belongs to the complex I subunit 2 family. In terms of assembly, NDH is composed of at least 16 different subunits, 5 of which are encoded in the nucleus.

The protein resides in the plastid. Its subcellular location is the chloroplast thylakoid membrane. The enzyme catalyses a plastoquinone + NADH + (n+1) H(+)(in) = a plastoquinol + NAD(+) + n H(+)(out). The catalysed reaction is a plastoquinone + NADPH + (n+1) H(+)(in) = a plastoquinol + NADP(+) + n H(+)(out). In terms of biological role, NDH shuttles electrons from NAD(P)H:plastoquinone, via FMN and iron-sulfur (Fe-S) centers, to quinones in the photosynthetic chain and possibly in a chloroplast respiratory chain. The immediate electron acceptor for the enzyme in this species is believed to be plastoquinone. Couples the redox reaction to proton translocation, and thus conserves the redox energy in a proton gradient. This chain is NAD(P)H-quinone oxidoreductase subunit 2 A, chloroplastic, found in Saccharum officinarum (Sugarcane).